A 380-amino-acid chain; its full sequence is Acid phosphatase-like protein XcAP-3 (380 aa).

A signal peptide spans 1–19; that stretch reads MKATILLFLVLAVVQLSTA. Cystine bridges form between C147–C374, C167–C221, and C347–C351.

Belongs to the histidine acid phosphatase family.

The protein resides in the secreted. Its function is as follows. Probably modulates blood feeding of fleas on vertebrate species by binding and sequestering different mediators involved in the host response. Binds histamine. Binds leukotriene C4. Does not bind serotonin, adrenaline, noradrenaline, leukotriene B4, leukotriene D4, leukotriene E4, ADP, and stable analogs of thromboxane A2: U-46619 and cTXA2. This chain is Acid phosphatase-like protein XcAP-3, found in Xenopsylla cheopis (Oriental rat flea).